Here is a 149-residue protein sequence, read N- to C-terminus: Heat shock protein beta-3 (149 aa).

The sHSP domain maps to 47–149 (KARAAQAPPV…VEVKDSAGTK (103 aa)).

Belongs to the small heat shock protein (HSP20) family.

It is found in the cytoplasm. The protein localises to the nucleus. Inhibitor of actin polymerization. The protein is Heat shock protein beta-3 (HSPB3) of Bos taurus (Bovine).